Reading from the N-terminus, the 344-residue chain is Arginine N-succinyltransferase (344 aa).

Leucine 125 is a binding site for succinyl-CoA. The active-site Proton donor is histidine 229.

This sequence belongs to the arginine N-succinyltransferase family.

It catalyses the reaction succinyl-CoA + L-arginine = N(2)-succinyl-L-arginine + CoA + H(+). The protein operates within amino-acid degradation; L-arginine degradation via AST pathway; L-glutamate and succinate from L-arginine: step 1/5. Its function is as follows. Catalyzes the transfer of succinyl-CoA to arginine to produce N(2)-succinylarginine. In Escherichia coli (strain 55989 / EAEC), this protein is Arginine N-succinyltransferase.